Here is a 362-residue protein sequence, read N- to C-terminus: NAD(P)H-quinone oxidoreductase subunit 1, chloroplastic (362 aa).

Helical transmembrane passes span 26–48 (LIWI…VIVW), 97–119 (FSIG…PLGY), 126–148 (LSIG…LMAG), 163–185 (AAAQ…SLLS), 254–276 (LFYL…LYLG), 296–318 (IIGI…LFLF), and 338–360 (LGWK…FQLV).

Belongs to the complex I subunit 1 family. As to quaternary structure, NDH is composed of at least 16 different subunits, 5 of which are encoded in the nucleus.

It localises to the plastid. The protein resides in the chloroplast thylakoid membrane. It catalyses the reaction a plastoquinone + NADH + (n+1) H(+)(in) = a plastoquinol + NAD(+) + n H(+)(out). The enzyme catalyses a plastoquinone + NADPH + (n+1) H(+)(in) = a plastoquinol + NADP(+) + n H(+)(out). Its function is as follows. NDH shuttles electrons from NAD(P)H:plastoquinone, via FMN and iron-sulfur (Fe-S) centers, to quinones in the photosynthetic chain and possibly in a chloroplast respiratory chain. The immediate electron acceptor for the enzyme in this species is believed to be plastoquinone. Couples the redox reaction to proton translocation, and thus conserves the redox energy in a proton gradient. This chain is NAD(P)H-quinone oxidoreductase subunit 1, chloroplastic (ndhA), found in Zea mays (Maize).